A 294-amino-acid polypeptide reads, in one-letter code: Potassium-transporting ATPase subunit beta (294 aa).

The Cytoplasmic portion of the chain corresponds to 1–36; the sequence is MAALQEKKSCSQRMAEFRHYCWNPDTGQMLGRTPAR. A helical; Signal-anchor for type II membrane protein transmembrane segment spans residues 37 to 57; that stretch reads WVWISLYYAGFYVVMTGLFAL. Over 58–294 the chain is Extracellular; it reads CIYVLMQTID…KVEFKLTIQK (237 aa). N-linked (GlcNAc...) asparagine glycosylation is found at asparagine 99, asparagine 103, asparagine 130, asparagine 146, and asparagine 161. Cysteine 131 and cysteine 152 are oxidised to a cystine. Residues cysteine 162 and cysteine 178 are joined by a disulfide bond. 2 N-linked (GlcNAc...) asparagine glycosylation sites follow: asparagine 193 and asparagine 225. Residues 194–294 form an immunoglobulin-like region; sequence NTAPRVDCTF…KVEFKLTIQK (101 aa). A disulfide bridge connects residues cysteine 201 and cysteine 266.

The protein belongs to the X(+)/potassium ATPases subunit beta family. As to quaternary structure, the ATPase pump is composed of two subunits: alpha (catalytic) and beta (regulatory). Interacts with alpha subunit ATP12A; this interaction is required for the formation of a functionally active pump and targeting at the plasma membrane. Interacts (via N-terminus) with alpha subunit ATP4A (via the P-domain). Post-translationally, N-glycosylation is necessary for assembly and functional expression of the pump at the plasma membrane. As to expression, expressed in parietal cells (at protein level).

The protein resides in the apical cell membrane. It localises to the cell membrane. The beta subunit of the gastric H(+)/K(+) ATPase pump which transports H(+) ions in exchange for K(+) ions across the apical membrane of parietal cells. Plays a structural and regulatory role in the assembly and membrane targeting of a functionally active pump. Within a transport cycle, the transfer of a H(+) ion across the membrane is coupled to ATP hydrolysis and is associated with a transient phosphorylation of the alpha subunit that shifts the pump conformation from inward-facing (E1) to outward-facing state (E2). Interacts with the phosphorylation domain of the alpha subunit and functions as a ratchet, stabilizing the lumenal-open E2 conformation and preventing the reverse reaction of the transport cycle. This Mus musculus (Mouse) protein is Potassium-transporting ATPase subunit beta (Atp4b).